We begin with the raw amino-acid sequence, 391 residues long: uncharacterized protein (391 aa).

The next 11 helical transmembrane spans lie at leucine 15 to leucine 35, phenylalanine 48 to phenylalanine 68, isoleucine 81 to isoleucine 101, isoleucine 139 to alanine 159, isoleucine 167 to proline 187, phenylalanine 217 to tyrosine 237, isoleucine 251 to phenylalanine 271, phenylalanine 275 to phenylalanine 295, isoleucine 303 to phenylalanine 323, threonine 346 to phenylalanine 366, and asparagine 369 to cysteine 389.

Belongs to the major facilitator superfamily.

Its subcellular location is the cell membrane. This is an uncharacterized protein from Buchnera aphidicola subsp. Schizaphis graminum (strain Sg).